Here is a 271-residue protein sequence, read N- to C-terminus: Virulence regulon transcriptional activator VirF (271 aa).

Residues 167–265 (ERLQKFMEEN…GCTPSQARLT (99 aa)) form the HTH araC/xylS-type domain. 2 consecutive DNA-binding regions (H-T-H motif) follow at residues 184–205 (SKFA…GTVY) and 232–255 (IVDI…RRRF).

In terms of biological role, transcriptional activator of the Yersinia virulence regulon. The chain is Virulence regulon transcriptional activator VirF (virF) from Yersinia enterocolitica serotype O:8 / biotype 1B (strain NCTC 13174 / 8081).